Here is a 136-residue protein sequence, read N- to C-terminus: Pleckstrin homology-like domain family A member 2 (136 aa).

The region spanning 12–105 (ILKEGDLEKR…WNAEITLALV (94 aa)) is the PH domain.

This sequence belongs to the PHLDA2 family.

The protein localises to the cytoplasm. Its subcellular location is the membrane. Plays a role in regulating placenta growth. May act via its PH domain that competes with other PH domain-containing proteins, thereby preventing their binding to membrane lipids. The protein is Pleckstrin homology-like domain family A member 2 (phlda2) of Xenopus tropicalis (Western clawed frog).